A 108-amino-acid chain; its full sequence is Succinate dehydrogenase assembly factor 4, mitochondrial (108 aa).

Residues 33–46 (NNNNNNNNNNNNNN) are compositionally biased toward low complexity. Disordered regions lie at residues 33-59 (NNNN…KENQ) and 79-108 (NPIT…VSDF). Basic and acidic residues predominate over residues 95–108 (RYNDWERNGRVSDF).

This sequence belongs to the SDHAF4 family. In terms of assembly, interacts with SdhA in its FAD-bound form.

The protein resides in the mitochondrion matrix. Functionally, plays an essential role in the assembly of succinate dehydrogenase (SDH), an enzyme complex (also referred to as respiratory complex II) that is a component of both the tricarboxylic acid (TCA) cycle and the mitochondrial electron transport chain, and which couples the oxidation of succinate to fumarate with the reduction of ubiquinone (coenzyme Q) to ubiquinol. Binds to the flavoprotein subunit SdhA in its FAD-bound form, blocking the generation of excess reactive oxygen species (ROS) and facilitating its assembly with the iron-sulfur protein subunit SdhB into the SDH catalytic dimer. The polypeptide is Succinate dehydrogenase assembly factor 4, mitochondrial (Dictyostelium discoideum (Social amoeba)).